The sequence spans 411 residues: MATTATMATSGSARKRLLKEEDMTKVEFETSEEVDVTPTFDTMGLREDLLRGIYAYGFEKPSAIQQRAIKQIIKGRDVIAQSQSGTGKTATFSISVLQCLDIQVRETQALILAPARELAVQIQKGLLTLGDYMNVQCHACIGGTNVGEDIRKLDYGQHVVAGTPGRVFDMIRRRSLRTRAIKMLVLDEADEMLNKGFKEQIYDVYRYLPPATQVVLISATLPHEILEMTNKFMTDPIRILVKRDELTLEGIKQFFVAVEREEWKFDTLCDLYDTLTITQAVIFCNTKRKVDWLTEKMREANFTVSSMHGDMPQKERESIMKEFRSGASRVLISTDVWARGLDVPQVSLIINYDLPNNRELYIHRIGRSGRYGRKGVAINFVKNDDIRILRDIEQYYSTQIDEMPMNVADLI.

M1 carries the N-acetylmethionine modification. A2 carries the post-translational modification N-acetylalanine; in Eukaryotic initiation factor 4A-III, N-terminally processed. Residues S10 and S12 each carry the phosphoserine modification. Residue K19 forms a Glycyl lysine isopeptide (Lys-Gly) (interchain with G-Cter in SUMO2) linkage. A Q motif motif is present at residues 38 to 66; that stretch reads PTFDTMGLREDLLRGIYAYGFEKPSAIQQ. ATP contacts are provided by residues K60, Q65, and 85–90; that span reads GTGKTA. Positions 69–239 constitute a Helicase ATP-binding domain; it reads IKQIIKGRDV…NKFMTDPIRI (171 aa). K124 carries the N6-acetyllysine modification. Residue K152 forms a Glycyl lysine isopeptide (Lys-Gly) (interchain with G-Cter in SUMO2) linkage. Position 163 is a phosphothreonine (T163). Positions 187–190 match the DEAD box motif; the sequence is DEAD. N6-acetyllysine is present on residues K198 and K296. Positions 250-411 constitute a Helicase C-terminal domain; that stretch reads GIKQFFVAVE…EMPMNVADLI (162 aa). Residue K314 forms a Glycyl lysine isopeptide (Lys-Gly) (interchain with G-Cter in SUMO2) linkage. An N6-acetyllysine modification is found at K321. Residues D342 and 367–371 each bind ATP; that span reads RSGRY. Glycyl lysine isopeptide (Lys-Gly) (interchain with G-Cter in SUMO2) cross-links involve residues K374 and K382.

Belongs to the DEAD box helicase family. eIF4A subfamily. As to quaternary structure, identified in the spliceosome C complex. Core component of the mRNA splicing-dependent exon junction complex (EJC); the core complex contains CASC3, EIF4A3, MAGOH or MAGOHB, and RBM8A. Interacts with CASC3, MAGOH, NXF1, RBM8A and ALYREF/THOC4. Component of the ALYREF/THOC4-EJC-RNA complex; in the complex interacts with MAGOH, RBM8A and THOC4 (via the WXHD motif); these interactions are likely specific to RNA-bound EJC. May interact with NOM1. Interacts with POLDIP3. Interacts with CWC22 and PRPF19 in an RNA-independent manner. Direct interaction with CWC22 is mediated by the helicase C-terminal domain. Full interaction with CWC22 occurs only when EIF4A3 is not part of the EJC and prevents EIF4A3 binding to RNA. Identified in a complex composed of the EJC core, UPF3B and UPF2. The EJC core can also interact with UPF3A (in vitro). Interacts with NCBP3. Interacts with NRDE2. Interacts with DHX34; the interaction is RNA-independent.

It localises to the nucleus. Its subcellular location is the nucleus speckle. It is found in the cytoplasm. It catalyses the reaction ATP + H2O = ADP + phosphate + H(+). With respect to regulation, the ATPase activity is increased some 4-fold in the presence of RNA. Functionally, ATP-dependent RNA helicase. Involved in pre-mRNA splicing as component of the spliceosome. Core component of the splicing-dependent multiprotein exon junction complex (EJC) deposited at splice junctions on mRNAs. The EJC is a dynamic structure consisting of core proteins and several peripheral nuclear and cytoplasmic associated factors that join the complex only transiently either during EJC assembly or during subsequent mRNA metabolism. The EJC marks the position of the exon-exon junction in the mature mRNA for the gene expression machinery and the core components remain bound to spliced mRNAs throughout all stages of mRNA metabolism thereby influencing downstream processes including nuclear mRNA export, subcellular mRNA localization, translation efficiency and nonsense-mediated mRNA decay (NMD). Its RNA-dependent ATPase and RNA-helicase activities are induced by CASC3, but abolished in presence of the MAGOH-RBM8A heterodimer, thereby trapping the ATP-bound EJC core onto spliced mRNA in a stable conformation. The inhibition of ATPase activity by the MAGOH-RBM8A heterodimer increases the RNA-binding affinity of the EJC. Involved in translational enhancement of spliced mRNAs after formation of the 80S ribosome complex. Binds spliced mRNA in sequence-independent manner, 20-24 nucleotides upstream of mRNA exon-exon junctions. Shows higher affinity for single-stranded RNA in an ATP-bound core EJC complex than after the ATP is hydrolyzed. Involved in the splicing modulation of BCL2L1/Bcl-X (and probably other apoptotic genes); specifically inhibits formation of proapoptotic isoforms; the function is different from the established EJC assembly. Involved in craniofacial development. This Macaca fascicularis (Crab-eating macaque) protein is Eukaryotic initiation factor 4A-III (EIF4A3).